The primary structure comprises 127 residues: Aspartate 1-decarboxylase (127 aa).

Catalysis depends on Ser-25, which acts as the Schiff-base intermediate with substrate; via pyruvic acid. Residue Ser-25 is modified to Pyruvic acid (Ser). Thr-57 serves as a coordination point for substrate. Catalysis depends on Tyr-58, which acts as the Proton donor. Position 73 to 75 (73 to 75) interacts with substrate; sequence GAA.

It belongs to the PanD family. Heterooctamer of four alpha and four beta subunits. Pyruvate is required as a cofactor. Is synthesized initially as an inactive proenzyme, which is activated by self-cleavage at a specific serine bond to produce a beta-subunit with a hydroxyl group at its C-terminus and an alpha-subunit with a pyruvoyl group at its N-terminus.

It is found in the cytoplasm. It catalyses the reaction L-aspartate + H(+) = beta-alanine + CO2. The protein operates within cofactor biosynthesis; (R)-pantothenate biosynthesis; beta-alanine from L-aspartate: step 1/1. Its function is as follows. Catalyzes the pyruvoyl-dependent decarboxylation of aspartate to produce beta-alanine. The chain is Aspartate 1-decarboxylase from Trichormus variabilis (strain ATCC 29413 / PCC 7937) (Anabaena variabilis).